The following is a 423-amino-acid chain: Gamma-glutamyl phosphate reductase 2 (423 aa).

Belongs to the gamma-glutamyl phosphate reductase family.

The protein localises to the cytoplasm. It carries out the reaction L-glutamate 5-semialdehyde + phosphate + NADP(+) = L-glutamyl 5-phosphate + NADPH + H(+). The protein operates within amino-acid biosynthesis; L-proline biosynthesis; L-glutamate 5-semialdehyde from L-glutamate: step 2/2. In terms of biological role, catalyzes the NADPH-dependent reduction of L-glutamate 5-phosphate into L-glutamate 5-semialdehyde and phosphate. The product spontaneously undergoes cyclization to form 1-pyrroline-5-carboxylate. The protein is Gamma-glutamyl phosphate reductase 2 of Bacillus licheniformis (strain ATCC 14580 / DSM 13 / JCM 2505 / CCUG 7422 / NBRC 12200 / NCIMB 9375 / NCTC 10341 / NRRL NRS-1264 / Gibson 46).